A 499-amino-acid polypeptide reads, in one-letter code: 3-beta-hydroxylase (499 aa).

The chain crosses the membrane as a helical; Signal-anchor for type II membrane protein span at residues 2 to 22; it reads FSSFETLILSFVSLFFMMIFI. Cysteine 441 is a heme binding site.

This sequence belongs to the cytochrome P450 family. Heme is required as a cofactor.

Its subcellular location is the membrane. It catalyses the reaction (+)-costunolide + reduced [NADPH--hemoprotein reductase] + O2 = 3beta-hydroxycostunolide + oxidized [NADPH--hemoprotein reductase] + H2O + H(+). The enzyme catalyses parthenolide + reduced [NADPH--hemoprotein reductase] + O2 = 3beta-hydroxyparthenolide + oxidized [NADPH--hemoprotein reductase] + H2O + H(+). Its pathway is secondary metabolite biosynthesis; terpenoid biosynthesis. In terms of biological role, involved in the biosynthesis of germacrene-derived sesquiterpene lactones. Component of the parthenolide biosynthetic pathway; parthenolide and conjugates are promising anti-cancer drugs highly active against colon cancer cells. Catalyzes the conversion of costunolide and parthenolide to 3-beta-hydroxycostunolide and 3-beta-hydroxyparthenolide, respectively. The sequence is that of 3-beta-hydroxylase from Tanacetum parthenium (Feverfew).